We begin with the raw amino-acid sequence, 568 residues long: 2-succinyl-5-enolpyruvyl-6-hydroxy-3-cyclohexene-1-carboxylate synthase (568 aa).

Belongs to the TPP enzyme family. MenD subfamily. As to quaternary structure, homodimer. Mg(2+) serves as cofactor. It depends on Mn(2+) as a cofactor. Thiamine diphosphate is required as a cofactor.

The enzyme catalyses isochorismate + 2-oxoglutarate + H(+) = 5-enolpyruvoyl-6-hydroxy-2-succinyl-cyclohex-3-ene-1-carboxylate + CO2. Its pathway is quinol/quinone metabolism; 1,4-dihydroxy-2-naphthoate biosynthesis; 1,4-dihydroxy-2-naphthoate from chorismate: step 2/7. It functions in the pathway quinol/quinone metabolism; menaquinone biosynthesis. Its function is as follows. Catalyzes the thiamine diphosphate-dependent decarboxylation of 2-oxoglutarate and the subsequent addition of the resulting succinic semialdehyde-thiamine pyrophosphate anion to isochorismate to yield 2-succinyl-5-enolpyruvyl-6-hydroxy-3-cyclohexene-1-carboxylate (SEPHCHC). The sequence is that of 2-succinyl-5-enolpyruvyl-6-hydroxy-3-cyclohexene-1-carboxylate synthase from Actinobacillus pleuropneumoniae serotype 7 (strain AP76).